Here is a 36-residue protein sequence, read N- to C-terminus: Photosystem I reaction center subunit VIII (36 aa).

A helical transmembrane segment spans residues 6 to 26; the sequence is LPSIFVPLVGLVFPAIAMASL.

It belongs to the PsaI family.

It is found in the plastid. Its subcellular location is the chloroplast thylakoid membrane. Its function is as follows. May help in the organization of the PsaL subunit. In Drimys granadensis, this protein is Photosystem I reaction center subunit VIII.